Reading from the N-terminus, the 63-residue chain is Frenatin 1.1 (63 aa).

Residues 1–22 (MAFLKKSLFLVLFLGLVSLSIC) form the signal peptide. Positions 23–49 (EKEKKEQEDEDENEEEKESEEGSEEKR) are excised as a propeptide. Residues 25–63 (EKKEQEDEDENEEEKESEEGSEEKRGLLDTLGGILGLGR) form a disordered region. The segment covering 30-45 (EDEDENEEEKESEEGS) has biased composition (acidic residues). Leu-61 is modified (leucine amide).

In terms of tissue distribution, expressed by the skin glands.

It localises to the secreted. Antimicrobial peptide with selective activity. Is only active against Micrococcus luteus (MIC=25 ug/ml) and not against Bacillus cereus, Escherichia coli, Leuconostoc mesenteroides, Micrococcus luteus, Pastewella haemolytica, Staphylococcus aureus, Streptococcus faecalis and Streptococcus uberis. In Nyctimystes infrafrenatus (White-lipped tree frog), this protein is Frenatin 1.1.